Consider the following 121-residue polypeptide: Small ribosomal subunit protein uS13 (121 aa).

A disordered region spans residues 95–121; it reads GLPVRGQKTKTNARTRKGKRKTVGAKS.

The protein belongs to the universal ribosomal protein uS13 family. In terms of assembly, part of the 30S ribosomal subunit. Forms a loose heterodimer with protein S19. Forms two bridges to the 50S subunit in the 70S ribosome.

In terms of biological role, located at the top of the head of the 30S subunit, it contacts several helices of the 16S rRNA. In the 70S ribosome it contacts the 23S rRNA (bridge B1a) and protein L5 of the 50S subunit (bridge B1b), connecting the 2 subunits; these bridges are implicated in subunit movement. Contacts the tRNAs in the A and P-sites. The polypeptide is Small ribosomal subunit protein uS13 (Campylobacter jejuni subsp. jejuni serotype O:23/36 (strain 81-176)).